A 326-amino-acid chain; its full sequence is tRNA uridine(34) hydroxylase (326 aa).

One can recognise a Rhodanese domain in the interval A123–S217. C177 serves as the catalytic Cysteine persulfide intermediate. Residues Q278–Q288 show a composition bias toward basic and acidic residues. The interval Q278–A326 is disordered. The segment covering A317 to A326 has biased composition (basic residues).

The protein belongs to the TrhO family.

It carries out the reaction uridine(34) in tRNA + AH2 + O2 = 5-hydroxyuridine(34) in tRNA + A + H2O. Functionally, catalyzes oxygen-dependent 5-hydroxyuridine (ho5U) modification at position 34 in tRNAs. This chain is tRNA uridine(34) hydroxylase, found in Vibrio parahaemolyticus serotype O3:K6 (strain RIMD 2210633).